Reading from the N-terminus, the 354-residue chain is Inactive ADP-ribosyltransferase ARH2 (354 aa).

S27 is modified (phosphoserine).

It belongs to the ADP-ribosylglycohydrolase family.

It localises to the cytoplasm. Its subcellular location is the myofibril. It is found in the sarcomere. Required for myofibril assembly and outgrowth of the cardiac chambers in the developing heart. Appears to be catalytically inactive, showing no activity against O-acetyl-ADP-ribose. The protein is Inactive ADP-ribosyltransferase ARH2 (ADPRHL1) of Bos taurus (Bovine).